A 405-amino-acid chain; its full sequence is Corticosteroid-binding globulin (405 aa).

Residues 1–22 (MPLLLYTCLLWLSTSGLWTVQA) form the signal peptide. 4 N-linked (GlcNAc...) asparagine glycosylation sites follow: Asn-26, Asn-31, Asn-96, and Asn-260. Asn-286 contributes to the cortisol binding site. Residues Asn-330 and Asn-369 are each glycosylated (N-linked (GlcNAc...) asparagine). Trp-393 is a binding site for cortisol.

Belongs to the serpin family. In terms of tissue distribution, expressed by the liver; secreted in plasma.

The protein localises to the secreted. Functionally, major transport protein for glucocorticoids and progestins in the blood of almost all vertebrate species. The protein is Corticosteroid-binding globulin (SERPINA6) of Pongo abelii (Sumatran orangutan).